The following is a 388-amino-acid chain: Ribonuclease D (388 aa).

The region spanning 24 to 191 (QYVSDEASLN…LYPQLADKLK (168 aa)) is the 3'-5' exonuclease domain. In terms of domain architecture, HRDC spans 230 to 310 (TEHQLAYLKV…QTADLSNPPE (81 aa)).

It belongs to the RNase D family. A divalent metal cation is required as a cofactor.

The protein localises to the cytoplasm. It carries out the reaction Exonucleolytic cleavage that removes extra residues from the 3'-terminus of tRNA to produce 5'-mononucleotides.. Functionally, exonuclease involved in the 3' processing of various precursor tRNAs. Initiates hydrolysis at the 3'-terminus of an RNA molecule and releases 5'-mononucleotides. The polypeptide is Ribonuclease D (Shewanella sp. (strain ANA-3)).